Consider the following 184-residue polypeptide: MAEPQPASSGLTDEAALSCCSDPDPSTKDFLLQQTMLRIKDPKKSLDFYTRVLGLTLLQKLDFPSMKFSLYFLAYEDKNDIPKDKTERTAWAFSRKATLELTHNWGTEDDETQSYHNGNSDPRGFGHIGIAVPDVYEACKRFEELGVKFVKKPDDGKMKGLAFVQDPDGYWIEILNPNKMATII.

N-acetylalanine is present on A2. C19 and C20 are oxidised to a cystine. In terms of domain architecture, VOC spans 31–177; it reads LLQQTMLRIK…DGYWIEILNP (147 aa). 2 residues coordinate substrate: Q34 and R38. Residue Q34 coordinates Zn(2+). Residue E100 coordinates Zn(2+). N104 provides a ligand contact to substrate. T107 is subject to Phosphothreonine. Substrate is bound by residues R123 and H127. Position 127 (H127) interacts with Zn(2+). C139 is modified (S-glutathionyl cysteine). K148 carries the post-translational modification N6-acetyllysine; alternate. K148 carries the post-translational modification N6-succinyllysine; alternate. A substrate-binding site is contributed by 157–158; sequence KM. E173 contacts Zn(2+). E173 acts as the Proton donor/acceptor in catalysis.

The protein belongs to the glyoxalase I family. In terms of assembly, homodimer. It depends on Zn(2+) as a cofactor. Post-translationally, glutathionylation at Cys-139 inhibits enzyme activity. Phosphorylated at Thr-107 in the presence of CaMK2. However, this is a consensus site for phosphorylation by CK2 so phosphorylation may be mediated by CK2 rather than CaMK2. Phosphorylation is induced by TNF and suppresses the TNF-induced transcriptional activity of NF-kappa-B. In terms of processing, exists in a nitric oxide (NO)-modified form. The exact nature of the modification is unknown, but it suppresses the TNF-induced transcriptional activity of NF-kappa-B.

The enzyme catalyses (R)-S-lactoylglutathione = methylglyoxal + glutathione. It participates in secondary metabolite metabolism; methylglyoxal degradation; (R)-lactate from methylglyoxal: step 1/2. Catalyzes the conversion of hemimercaptal, formed from methylglyoxal and glutathione, to S-lactoylglutathione. Involved in the regulation of TNF-induced transcriptional activity of NF-kappa-B. Required for normal osteoclastogenesis. This is Lactoylglutathione lyase (Glo1) from Rattus norvegicus (Rat).